Reading from the N-terminus, the 94-residue chain is Large ribosomal subunit protein eL42 (94 aa).

Cys11, Cys14, Cys71, and Cys74 together coordinate Zn(2+). The segment at 11-74 adopts a C4-type zinc-finger fold; it reads CPFCKRHTIH…LDLRFRCTVC (64 aa).

It belongs to the eukaryotic ribosomal protein eL42 family. Part of the 50S ribosomal subunit. Zn(2+) serves as cofactor.

Functionally, binds to the 23S rRNA. In Thermococcus kodakarensis (strain ATCC BAA-918 / JCM 12380 / KOD1) (Pyrococcus kodakaraensis (strain KOD1)), this protein is Large ribosomal subunit protein eL42.